The following is a 70-amino-acid chain: Spore germination protein-like protein YpzD (70 aa).

Belongs to the GerPA/GerPF family.

The protein is Spore germination protein-like protein YpzD (ypzD) of Bacillus subtilis (strain 168).